Consider the following 582-residue polypeptide: PTS system lactose-specific EIICB component (582 aa).

The PTS EIIC type-3 domain occupies 8–409 (IEKGKPFFEK…VVDVIIYYPF (402 aa)). 9 helical membrane-spanning segments follow: residues 30 to 50 (GFIA…ITYV), 64 to 84 (GILM…VAGT), 103 to 123 (INFI…AADP), 137 to 157 (KGLL…NFFV), 176 to 196 (VFKD…LDLL), 222 to 242 (GWIG…VGIH), 283 to 303 (FVAT…FMWL), 339 to 359 (VFFI…KFFV), and 381 to 401 (IVMG…LIVV). The segment at 453–473 (ASEADTDDTSSVDETTSTSST) is disordered. A compositionally biased stretch (low complexity) spans 464–473 (VDETTSTSST). One can recognise a PTS EIIB type-3 domain in the interval 479-582 (QTNVLVLCAG…LEFVKQQFNN (104 aa)). Cys-486 functions as the Phosphocysteine intermediate; for EIIB activity in the catalytic mechanism. Cys-486 is modified (phosphocysteine; by EIIA).

The protein resides in the cell membrane. The catalysed reaction is lactose(out) + N(pros)-phospho-L-histidyl-[protein] = lactose 6-phosphate(in) + L-histidyl-[protein]. The phosphoenolpyruvate-dependent sugar phosphotransferase system (sugar PTS), a major carbohydrate active transport system, catalyzes the phosphorylation of incoming sugar substrates concomitantly with their translocation across the cell membrane. The enzyme II LacEF PTS system is involved in lactose transport. In Staphylococcus epidermidis (strain ATCC 35984 / DSM 28319 / BCRC 17069 / CCUG 31568 / BM 3577 / RP62A), this protein is PTS system lactose-specific EIICB component.